The following is a 485-amino-acid chain: Glycogen synthase (485 aa).

Residue Lys15 participates in ADP-alpha-D-glucose binding.

Belongs to the glycosyltransferase 1 family. Bacterial/plant glycogen synthase subfamily.

The catalysed reaction is [(1-&gt;4)-alpha-D-glucosyl](n) + ADP-alpha-D-glucose = [(1-&gt;4)-alpha-D-glucosyl](n+1) + ADP + H(+). It participates in glycan biosynthesis; glycogen biosynthesis. Functionally, synthesizes alpha-1,4-glucan chains using ADP-glucose. The protein is Glycogen synthase (glgA) of Geobacillus stearothermophilus (Bacillus stearothermophilus).